Here is a 97-residue protein sequence, read N- to C-terminus: Aspartyl/glutamyl-tRNA(Asn/Gln) amidotransferase subunit C (97 aa).

Belongs to the GatC family. Heterotrimer of A, B and C subunits.

It catalyses the reaction L-glutamyl-tRNA(Gln) + L-glutamine + ATP + H2O = L-glutaminyl-tRNA(Gln) + L-glutamate + ADP + phosphate + H(+). The catalysed reaction is L-aspartyl-tRNA(Asn) + L-glutamine + ATP + H2O = L-asparaginyl-tRNA(Asn) + L-glutamate + ADP + phosphate + 2 H(+). Its function is as follows. Allows the formation of correctly charged Asn-tRNA(Asn) or Gln-tRNA(Gln) through the transamidation of misacylated Asp-tRNA(Asn) or Glu-tRNA(Gln) in organisms which lack either or both of asparaginyl-tRNA or glutaminyl-tRNA synthetases. The reaction takes place in the presence of glutamine and ATP through an activated phospho-Asp-tRNA(Asn) or phospho-Glu-tRNA(Gln). The sequence is that of Aspartyl/glutamyl-tRNA(Asn/Gln) amidotransferase subunit C from Picosynechococcus sp. (strain ATCC 27264 / PCC 7002 / PR-6) (Agmenellum quadruplicatum).